A 147-amino-acid chain; its full sequence is Hemoglobin subunit beta (147 aa).

In terms of domain architecture, Globin spans 2 to 147; sequence DWTDAERAAI…VVSALGRQYH (146 aa). The heme b site is built by histidine 63 and histidine 92.

It belongs to the globin family. In terms of assembly, heterotetramer of two alpha chains and two beta chains. In terms of tissue distribution, red blood cells.

In terms of biological role, involved in oxygen transport from gills to the various peripheral tissues. The polypeptide is Hemoglobin subunit beta (hbb) (Leiostomus xanthurus (Spot)).